The following is a 164-amino-acid chain: RNA pyrophosphohydrolase (164 aa).

In terms of domain architecture, Nudix hydrolase spans 8–153 (PYRSNVGAAL…KRPIYERLAR (146 aa)). The Nudix box signature appears at 45–66 (GGIDGDEDPAAAVLRELDEEIG).

It belongs to the Nudix hydrolase family. RppH subfamily. Requires a divalent metal cation as cofactor.

Its function is as follows. Accelerates the degradation of transcripts by removing pyrophosphate from the 5'-end of triphosphorylated RNA, leading to a more labile monophosphorylated state that can stimulate subsequent ribonuclease cleavage. The polypeptide is RNA pyrophosphohydrolase (Acidiphilium cryptum (strain JF-5)).